A 267-amino-acid chain; its full sequence is Tryptophan synthase alpha chain (267 aa).

Catalysis depends on proton acceptor residues Glu-49 and Asp-60.

Belongs to the TrpA family. Tetramer of two alpha and two beta chains.

It catalyses the reaction (1S,2R)-1-C-(indol-3-yl)glycerol 3-phosphate + L-serine = D-glyceraldehyde 3-phosphate + L-tryptophan + H2O. The protein operates within amino-acid biosynthesis; L-tryptophan biosynthesis; L-tryptophan from chorismate: step 5/5. Its function is as follows. The alpha subunit is responsible for the aldol cleavage of indoleglycerol phosphate to indole and glyceraldehyde 3-phosphate. The polypeptide is Tryptophan synthase alpha chain (Salinispora tropica (strain ATCC BAA-916 / DSM 44818 / JCM 13857 / NBRC 105044 / CNB-440)).